Reading from the N-terminus, the 484-residue chain is Probable efflux pump outer membrane protein TtgC (484 aa).

The first 17 residues, 1-17 (MTKSLLSLAVTAFILGG), serve as a signal peptide directing secretion. A lipid anchor (N-palmitoyl cysteine) is attached at C18. C18 is lipidated: S-diacylglycerol cysteine.

This sequence belongs to the outer membrane factor (OMF) (TC 1.B.17) family.

The protein resides in the cell outer membrane. Its function is as follows. Probable outer membrane component of the TtgABC efflux pump with unknown specificity. The protein is Probable efflux pump outer membrane protein TtgC (ttgC) of Pseudomonas putida (strain ATCC 47054 / DSM 6125 / CFBP 8728 / NCIMB 11950 / KT2440).